We begin with the raw amino-acid sequence, 877 residues long: Neurotrypsin (877 aa).

A signal peptide spans 1 to 20 (MTLARFVLALVLGALPEVVS). Asn26 is a glycosylation site (N-linked (GlcNAc...) asparagine). The interval 31 to 90 (HRHRHRHSPPPGLQYPYYLPTQQRPPRTRPPPPLPRFPRPPRALPAQRPHALQAGHTPRP) is disordered. Residues 44–55 (QYPYYLPTQQRP) are compositionally biased toward low complexity. Positions 58 to 73 (TRPPPPLPRFPRPPRA) are enriched in pro residues. The region spanning 95–167 (CPAGEPWVSV…GKVDWGYCDC (73 aa)) is the Kringle domain. Cystine bridges form between Cys95-Cys167, Cys111-Cys151, Cys140-Cys165, Cys197-Cys261, Cys210-Cys271, Cys241-Cys251, Cys307-Cys371, Cys320-Cys381, Cys351-Cys361, Cys414-Cys477, Cys427-Cys487, Cys457-Cys467, Cys527-Cys591, Cys540-Cys601, Cys571-Cys581, Cys621-Cys752, Cys663-Cys679, Cys767-Cys833, Cys796-Cys810, and Cys823-Cys852. SRCR domains are found at residues 172-273 (VRLR…TCSF), 282-383 (IRLV…SCTP), 389-489 (IRLA…ACYP), and 502-603 (VRLM…ICDY). The interval 621 to 632 (CGLRLLHRRQKR) is zymogen activation region. One can recognise a Peptidase S1 domain in the interval 633 to 876 (IIGGKNSLRG…FVPWIKSVTK (244 aa)). The active-site Charge relay system is His678. Residue Asn685 is glycosylated (N-linked (GlcNAc...) asparagine). Catalysis depends on Asp728, which acts as the Charge relay system. Catalysis depends on Ser827, which acts as the Charge relay system.

This sequence belongs to the peptidase S1 family.

The protein localises to the secreted. Plays a role in neuronal plasticity and the proteolytic action may subserve structural reorganizations associated with learning and memory operations. In Pongo pygmaeus (Bornean orangutan), this protein is Neurotrypsin (PRSS12).